The primary structure comprises 266 residues: Tryptophan synthase alpha chain (266 aa).

Active-site proton acceptor residues include glutamate 49 and aspartate 60.

It belongs to the TrpA family. In terms of assembly, tetramer of two alpha and two beta chains.

It catalyses the reaction (1S,2R)-1-C-(indol-3-yl)glycerol 3-phosphate + L-serine = D-glyceraldehyde 3-phosphate + L-tryptophan + H2O. Its pathway is amino-acid biosynthesis; L-tryptophan biosynthesis; L-tryptophan from chorismate: step 5/5. Functionally, the alpha subunit is responsible for the aldol cleavage of indoleglycerol phosphate to indole and glyceraldehyde 3-phosphate. In Synechococcus elongatus (strain ATCC 33912 / PCC 7942 / FACHB-805) (Anacystis nidulans R2), this protein is Tryptophan synthase alpha chain.